A 234-amino-acid polypeptide reads, in one-letter code: Transcriptional activator protein TraR (234 aa).

Positions 167 to 232 (TAEDAAWLDP…HLTALAIRRK (66 aa)) constitute an HTH luxR-type domain. Positions 191–210 (MEEIADVEGVKYNSVRVKLR) form a DNA-binding region, H-T-H motif.

Belongs to the autoinducer-regulated transcriptional regulatory protein family.

Its function is as follows. Positive regulation of conjugal transfer of Ti plasmids. TraR activates target genes in the presence of AAI and also activates traR and traI themselves. This is Transcriptional activator protein TraR (traR) from Rhizobium radiobacter (Agrobacterium tumefaciens).